The following is a 136-amino-acid chain: ATP synthase epsilon chain (136 aa).

The protein belongs to the ATPase epsilon chain family. In terms of assembly, F-type ATPases have 2 components, CF(1) - the catalytic core - and CF(0) - the membrane proton channel. CF(1) has five subunits: alpha(3), beta(3), gamma(1), delta(1), epsilon(1). CF(0) has three main subunits: a, b and c.

Its subcellular location is the cell inner membrane. Its function is as follows. Produces ATP from ADP in the presence of a proton gradient across the membrane. This Agrobacterium fabrum (strain C58 / ATCC 33970) (Agrobacterium tumefaciens (strain C58)) protein is ATP synthase epsilon chain.